A 654-amino-acid chain; its full sequence is Beta-galactosidase-1-like protein (654 aa).

The N-terminal stretch at 1–27 (MAPKKPSCLRSLLLPLSLTLLLPQADT) is a signal peptide. The N-linked (GlcNAc...) asparagine glycan is linked to asparagine 97. The Proton donor role is filled by glutamate 186. Residue asparagine 243 is glycosylated (N-linked (GlcNAc...) asparagine). Catalysis depends on glutamate 264, which acts as the Nucleophile.

It belongs to the glycosyl hydrolase 35 family.

The protein resides in the secreted. Its function is as follows. Probable glycosyl hydrolase. In Macaca fascicularis (Crab-eating macaque), this protein is Beta-galactosidase-1-like protein (GLB1L).